The sequence spans 294 residues: Cytidine deaminase (294 aa).

CMP/dCMP-type deaminase domains follow at residues 48–168 and 186–294; these read DDDA…FGPR and LKGD…VTLA. 89–91 is a binding site for substrate; that stretch reads NME. A Zn(2+)-binding site is contributed by His102. The Proton donor role is filled by Glu104. The Zn(2+) site is built by Cys129 and Cys132.

Belongs to the cytidine and deoxycytidylate deaminase family. In terms of assembly, homodimer. Requires Zn(2+) as cofactor.

It catalyses the reaction cytidine + H2O + H(+) = uridine + NH4(+). The catalysed reaction is 2'-deoxycytidine + H2O + H(+) = 2'-deoxyuridine + NH4(+). Functionally, this enzyme scavenges exogenous and endogenous cytidine and 2'-deoxycytidine for UMP synthesis. The protein is Cytidine deaminase of Cronobacter sakazakii (strain ATCC BAA-894) (Enterobacter sakazakii).